Reading from the N-terminus, the 239-residue chain is Ribonuclease PH (239 aa).

Residues R87 and G125 to R127 each bind phosphate.

It belongs to the RNase PH family. In terms of assembly, homohexameric ring arranged as a trimer of dimers.

The catalysed reaction is tRNA(n+1) + phosphate = tRNA(n) + a ribonucleoside 5'-diphosphate. Phosphorolytic 3'-5' exoribonuclease that plays an important role in tRNA 3'-end maturation. Removes nucleotide residues following the 3'-CCA terminus of tRNAs; can also add nucleotides to the ends of RNA molecules by using nucleoside diphosphates as substrates, but this may not be physiologically important. Probably plays a role in initiation of 16S rRNA degradation (leading to ribosome degradation) during starvation. The chain is Ribonuclease PH from Cellvibrio japonicus (strain Ueda107) (Pseudomonas fluorescens subsp. cellulosa).